Reading from the N-terminus, the 252-residue chain is Phosphonates import ATP-binding protein PhnC 1 (252 aa).

Positions 2–244 constitute an ABC transporter domain; that stretch reads ISLNKLGVTY…QLEEIYQTLS (243 aa). Residue 35 to 42 coordinates ATP; the sequence is GSSGAGKS.

It belongs to the ABC transporter superfamily. Phosphonates importer (TC 3.A.1.9.1) family. In terms of assembly, the complex is composed of two ATP-binding proteins (PhnC), two transmembrane proteins (PhnE) and a solute-binding protein (PhnD).

The protein resides in the cell inner membrane. The enzyme catalyses phosphonate(out) + ATP + H2O = phosphonate(in) + ADP + phosphate + H(+). Functionally, part of the ABC transporter complex PhnCDE involved in phosphonates import. Responsible for energy coupling to the transport system. The chain is Phosphonates import ATP-binding protein PhnC 1 from Trichodesmium erythraeum (strain IMS101).